Reading from the N-terminus, the 415-residue chain is MGDEGPGSPVHLLCLAASSGVPLFCRSSSGGAPSRQQLPFSVIGSLNGVHMFGQNLDVQLNSARTEDTTVVWKNFHDSITLIVLSSEEGTSELRLERMLHMVFGAMVLIVGLEELTNIRNVERLKKELRASYCLIDSFLGNSELIGDLTQCVDCVIPPEGSAMQETLSGFAEATGTAFVSLLVSGRVVAATEGWWRLGMPEAVLLPWLVGSLPPQAARDYPVYLPHGSPTVPHRLLTLTLLRGLELCLLCGPRPPLGQLDPQLMERWWQPLLEPLRACLPLGPRALPEGFPLHSDILGLLLLHLELRRCLFTMEPSKDKEPSPEQRRRLLRNFYTLVATTHFPPEPGPAEKQEDTVYPAQMPRACYLVLGPGMGWQLVAVQLGLRLLLLLLSPHTPTHGLRSLATRTLQALTPLL.

Belongs to the fuzzy family. In terms of assembly, component of the CPLANE (ciliogenesis and planar polarity effectors) complex, composed of INTU, FUZ and WDPCP. Interacts with CPLANE1. Interacts with CPLANE2. As to expression, expressed in dermal and epidermal cells.

The protein localises to the cytoplasm. It localises to the cytoskeleton. It is found in the cilium basal body. Probable planar cell polarity effector involved in cilium biogenesis. May regulate protein and membrane transport to the cilium. Proposed to function as core component of the CPLANE (ciliogenesis and planar polarity effectors) complex involved in the recruitment of peripheral IFT-A proteins to basal bodies. May regulate the morphogenesis of hair follicles which depends on functional primary cilia. Binds phosphatidylinositol 3-phosphate with highest affinity, followed by phosphatidylinositol 4-phosphate and phosphatidylinositol 5-phosphate. This is Protein fuzzy homolog (Fuz) from Mus musculus (Mouse).